The primary structure comprises 279 residues: Probable diacylglycerol pyrophosphate phosphatase 1 (279 aa).

Over 1–17 (MEAVGKHVKLFWNVYSD) the chain is Lumenal. A helical transmembrane segment spans residues 18 to 38 (YAVLIAISLSYFVFDVLMLPF). The Cytoplasmic portion of the chain corresponds to 39–58 (TRQFSLEDITISHPFALHEQ). Residues 59 to 79 (VPTKYLGIICVFFPALVLYGF) form a helical membrane-spanning segment. The Lumenal portion of the chain corresponds to 80 to 86 (GKLRNNS). A helical membrane pass occupies residues 87 to 107 (LLFWKSLMGLLYSTMVCGLCV). Residues 108 to 163 (SLLKNAVGRPRPDFLARCQPFESTPKTGLVDVLSCSVPWSDKVLQDGFRSFPSGHT) are Cytoplasmic-facing. The segment at 111–119 (KNAVGRPRP) is phosphatase sequence motif I. The segment at 159 to 162 (PSGH) is phosphatase sequence motif II. Residues 164–184 (SFSFAGLGFLAIFLAGQLKMF) form a helical membrane-spanning segment. Topologically, residues 185–187 (RNK) are lumenal. Residues 188–208 (TSSWKVVVPLVPLSIASWIGL) traverse the membrane as a helical segment. The Cytoplasmic portion of the chain corresponds to 209–220 (SRSQDYRHHKED). A phosphatase sequence motif III region spans residues 209–220 (SRSQDYRHHKED). Residues 221–241 (IAVGALFGFAIAYVVYRQLFP) traverse the membrane as a helical segment. The Lumenal portion of the chain corresponds to 242 to 279 (PLDHHNADILYVQAELDEGYTNVHSAGNSSATNAEQMV).

The protein belongs to the PA-phosphatase related phosphoesterase family.

Its subcellular location is the vacuole membrane. The protein localises to the endoplasmic reticulum membrane. It carries out the reaction a 1,2-diacyl-sn-glycerol 3-diphosphate + H2O = a 1,2-diacyl-sn-glycero-3-phosphate + phosphate + H(+). The catalysed reaction is a 1,2-diacyl-sn-glycero-3-phosphate + H2O = a 1,2-diacyl-sn-glycerol + phosphate. Catalyzes the dephosphorylation of diacylglycerol phosphate (DGPP) to phosphatidate (PA) and the subsequent dephosphorylation of PA to diacylglycerol (DAG). The chain is Probable diacylglycerol pyrophosphate phosphatase 1 (dpp1) from Schizosaccharomyces pombe (strain 972 / ATCC 24843) (Fission yeast).